A 188-amino-acid chain; its full sequence is ATP synthase subunit b 1 (188 aa).

Residues 35–55 (VHFGSHLFWLAISFGLFYLFI) traverse the membrane as a helical segment.

It belongs to the ATPase B chain family. In terms of assembly, F-type ATPases have 2 components, F(1) - the catalytic core - and F(0) - the membrane proton channel. F(1) has five subunits: alpha(3), beta(3), gamma(1), delta(1), epsilon(1). F(0) has three main subunits: a(1), b(2) and c(10-14). The alpha and beta chains form an alternating ring which encloses part of the gamma chain. F(1) is attached to F(0) by a central stalk formed by the gamma and epsilon chains, while a peripheral stalk is formed by the delta and b chains.

It is found in the cell inner membrane. F(1)F(0) ATP synthase produces ATP from ADP in the presence of a proton or sodium gradient. F-type ATPases consist of two structural domains, F(1) containing the extramembraneous catalytic core and F(0) containing the membrane proton channel, linked together by a central stalk and a peripheral stalk. During catalysis, ATP synthesis in the catalytic domain of F(1) is coupled via a rotary mechanism of the central stalk subunits to proton translocation. Its function is as follows. Component of the F(0) channel, it forms part of the peripheral stalk, linking F(1) to F(0). This chain is ATP synthase subunit b 1, found in Bartonella henselae (strain ATCC 49882 / DSM 28221 / CCUG 30454 / Houston 1) (Rochalimaea henselae).